Here is a 179-residue protein sequence, read N- to C-terminus: MIFYLHGFDATSPGNHEKMRQLQFIDPDVRLISYSTLHPKHDMQHLLKEVAKQMQYCDDPAPLMVGVGLGAYWAERIGFLNGLKSVLINPNLHPEETMQGKIDRPEEYADIANKCVSEFRLKNTHKAMCILSRVDEVLDSEATAEALKPYYTIEWDETQTHKFPQLAAHLPKIKAFKLG.

Belongs to the UPF0227 family.

The protein is UPF0227 protein Shewmr4_1727 of Shewanella sp. (strain MR-4).